The sequence spans 449 residues: Protein translocase subunit SecD (449 aa).

6 consecutive transmembrane segments (helical) span residues Gly6–Thr26, Leu272–Tyr292, Leu294–Phe314, Val317–Val337, Thr379–Val399, and Gly401–Thr421.

This sequence belongs to the SecD/SecF family. SecD subfamily. Forms a complex with SecF. Part of the essential Sec protein translocation apparatus which comprises SecA, SecYEG and auxiliary proteins SecDF. Other proteins may also be involved.

It is found in the cell membrane. In terms of biological role, part of the Sec protein translocase complex. Interacts with the SecYEG preprotein conducting channel. SecDF uses the proton motive force (PMF) to complete protein translocation after the ATP-dependent function of SecA. This Dehalococcoides mccartyi (strain VS) protein is Protein translocase subunit SecD.